We begin with the raw amino-acid sequence, 151 residues long: Small ribosomal subunit protein eS6 (151 aa).

This sequence belongs to the eukaryotic ribosomal protein eS6 family.

In Pyrobaculum calidifontis (strain DSM 21063 / JCM 11548 / VA1), this protein is Small ribosomal subunit protein eS6.